We begin with the raw amino-acid sequence, 209 residues long: Thymidine kinase (209 aa).

ATP-binding positions include 9-16 and 88-91; these read AAMNAGKS and DEAQ. The active-site Proton acceptor is E89. Residues C146, C148, C183, and H186 each contribute to the Zn(2+) site.

Belongs to the thymidine kinase family. Homotetramer.

The protein localises to the cytoplasm. It catalyses the reaction thymidine + ATP = dTMP + ADP + H(+). The protein is Thymidine kinase of Legionella pneumophila subsp. pneumophila (strain Philadelphia 1 / ATCC 33152 / DSM 7513).